Here is a 525-residue protein sequence, read N- to C-terminus: GMP synthase [glutamine-hydrolyzing] (525 aa).

A Glutamine amidotransferase type-1 domain is found at 8–207 (KILILDFGSQ…ALDICGCAAN (200 aa)). Cys85 (nucleophile) is an active-site residue. Residues His181 and Glu183 contribute to the active site. Positions 208–400 (WKPSSIIEDA…LGLPYNMLYR (193 aa)) constitute a GMPS ATP-PPase domain. 235-241 (SGGVDSS) is an ATP binding site.

As to quaternary structure, homodimer.

The catalysed reaction is XMP + L-glutamine + ATP + H2O = GMP + L-glutamate + AMP + diphosphate + 2 H(+). It functions in the pathway purine metabolism; GMP biosynthesis; GMP from XMP (L-Gln route): step 1/1. Catalyzes the synthesis of GMP from XMP. The protein is GMP synthase [glutamine-hydrolyzing] of Shewanella baltica (strain OS155 / ATCC BAA-1091).